The sequence spans 224 residues: LexA repressor (224 aa).

Residues 29–49 constitute a DNA-binding region (H-T-H motif); it reads RAEIARALGFRSPNAAEDHLK. Residues serine 142 and lysine 179 each act as for autocatalytic cleavage activity in the active site.

It belongs to the peptidase S24 family. In terms of assembly, homodimer.

The enzyme catalyses Hydrolysis of Ala-|-Gly bond in repressor LexA.. Its function is as follows. Represses a number of genes involved in the response to DNA damage (SOS response), including recA and lexA. In the presence of single-stranded DNA, RecA interacts with LexA causing an autocatalytic cleavage which disrupts the DNA-binding part of LexA, leading to derepression of the SOS regulon and eventually DNA repair. In Bordetella petrii (strain ATCC BAA-461 / DSM 12804 / CCUG 43448), this protein is LexA repressor.